Here is an 88-residue protein sequence, read N- to C-terminus: Large ribosomal subunit protein bL27 (88 aa).

A disordered region spans residues 1-24 (MAHKKGTGSTRNGRDSNAKRLGVK).

The protein belongs to the bacterial ribosomal protein bL27 family.

This is Large ribosomal subunit protein bL27 from Synechococcus sp. (strain CC9605).